The primary structure comprises 500 residues: Cytochrome P450 726A27 (500 aa).

Residues 7-27 (IPSYPIIFSFFIFIFMLIKIW) traverse the membrane as a helical; Signal-anchor for type II membrane protein segment. Cys-440 is a binding site for heme.

The protein belongs to the cytochrome P450 family. Heme is required as a cofactor. Expressed in mature seeds.

The protein resides in the membrane. The enzyme catalyses (-)-casbene + reduced [NADPH--hemoprotein reductase] + O2 = 4-hydroxycasbene + oxidized [NADPH--hemoprotein reductase] + H2O + H(+). The catalysed reaction is 8-hydroxycasbene + reduced [NADPH--hemoprotein reductase] + O2 = 4,8-dihydroxycasbene + oxidized [NADPH--hemoprotein reductase] + H2O + H(+). It catalyses the reaction 4,8-dihydroxycasbene + reduced [NADPH--hemoprotein reductase] + O2 = 4,5,8-trihydroxycasbene + oxidized [NADPH--hemoprotein reductase] + H2O + H(+). The protein operates within secondary metabolite biosynthesis; terpenoid biosynthesis. Its function is as follows. Involved in the biosynthesis of macrocyclic lathyrane type diterpenoids (also called Euphorbia factors) natural products, including the cyclization route from casbene to jolkinol C, a precursor for ingenol mebutate that is used to treat actinic keratosis, a precancerous skin condition. Catalyzes the hydroxylation of (-)-casbene and 8-hydroxycasbene to produce 4-hydroxycasbene and 4,8-dihydroxycasbene, respectively. The protein is Cytochrome P450 726A27 of Euphorbia lathyris (Caper spurge).